Here is a 96-residue protein sequence, read N- to C-terminus: MIQKLTSEQRATQLAGLHGWQAVADRDAIQRQFKFADFNEAFGFMTRVAIKAQEMDHHPEWFNVYNKVEITLSTHDAGGLTERDIKLATFIDSITA.

The protein belongs to the pterin-4-alpha-carbinolamine dehydratase family.

The catalysed reaction is (4aS,6R)-4a-hydroxy-L-erythro-5,6,7,8-tetrahydrobiopterin = (6R)-L-erythro-6,7-dihydrobiopterin + H2O. This chain is Putative pterin-4-alpha-carbinolamine dehydratase, found in Paraburkholderia phytofirmans (strain DSM 17436 / LMG 22146 / PsJN) (Burkholderia phytofirmans).